We begin with the raw amino-acid sequence, 603 residues long: ADP-ribosylation factor-binding protein GGA2 (603 aa).

The interval Met1–Gly22 is disordered. Over residues Pro13–Gly22 the composition is skewed to low complexity. Residues Ala36 to Gln166 form the VHS domain. Positions Asp190 to Glu317 constitute a GAT domain. A unstructured hinge region spans residues Gly318–Pro473. The 122-residue stretch at Ser474–Pro595 folds into the GAE domain.

Belongs to the GGA protein family. In terms of assembly, monomer. Interacts with NECAP1, TSG101, UBC and AFTPH/aftiphilin. Interacts with CNST. Interacts with GGA1 and GGA3. Binds to clathrin and activated ARFs, such as ARF1, ARF5 and ARF6. Binds RABEP1 and RABGEF1. Interacts with the type-I membrane proteins LRP3, M6PR/CD-MPR, IGF2R/CI-MPR and BACE1. Interacts (via N-terminal VHS domain) with SORL1/sorLA and SORT1 (via C-terminal cytosolic domain). Binds the accessory proteins CCDC91, P200, SYNRG, EPN4 and NECAP2. Interacts with ADRA2B. Interacts (via VHS domain) with PIK4B; the interaction is important for PIK4B location at the Golgi apparatus membrane. Ubiquitinated.

The protein resides in the golgi apparatus. It localises to the trans-Golgi network membrane. The protein localises to the endosome membrane. It is found in the early endosome membrane. Plays a role in protein sorting and trafficking between the trans-Golgi network (TGN) and endosomes. Mediates the ARF-dependent recruitment of clathrin to the TGN and binds ubiquitinated proteins and membrane cargo molecules with a cytosolic acidic cluster-dileucine (DXXLL) motif. Mediates export of the GPCR receptor ADRA2B to the cell surface. Regulates retrograde transport of phosphorylated form of BACE1 from endosomes to the trans-Golgi network. The chain is ADP-ribosylation factor-binding protein GGA2 (Gga2) from Mus musculus (Mouse).